Consider the following 310-residue polypeptide: MKITVIGAGNVGATAALRIAEKQLAREVVLIDIVEGIPQGKALDMYESGPVALFDTRVSGSNDYRDSADSDIILITAGLARKPGMSREDLLQKNATIIKEVTSQVMQYSKNPILIMVSNPLDVMTYVARQVSGLPEERVIGMAGVLDTARFRSFIAEELQVSMQDINAFVLGGHGDSMVPVVKYTNVAGIPITELMSIEKINAIVERTKNGGIEIVNHLKTGSAFYAPAASAVEMIESIVKDRKRILPCTTCLKGQFGIQNVFCGAPVKLGRKGVEQILEINLSADELKALQQSASIVEQNCRNLDALLG.

NAD(+)-binding positions include 7-12 (GAGNVG) and aspartate 32. Positions 81 and 87 each coordinate substrate. NAD(+) contacts are provided by residues asparagine 94 and 117–119 (VSN). Asparagine 119 and arginine 150 together coordinate substrate. Histidine 174 (proton acceptor) is an active-site residue.

Belongs to the LDH/MDH superfamily. MDH type 3 family.

The enzyme catalyses (S)-malate + NAD(+) = oxaloacetate + NADH + H(+). Its function is as follows. Catalyzes the reversible oxidation of malate to oxaloacetate. This is Malate dehydrogenase from Chlorobium luteolum (strain DSM 273 / BCRC 81028 / 2530) (Pelodictyon luteolum).